The following is a 387-amino-acid chain: V-set and immunoglobulin domain-containing protein 1 (387 aa).

Positions Met-1–Val-21 are cleaved as a signal peptide. The Ig-like V-type domain occupies Val-22 to Leu-132. At Val-22–Glu-232 the chain is on the extracellular side. N-linked (GlcNAc...) asparagine glycosylation is found at Asn-32 and Asn-38. Residues Cys-43 and Cys-116 are joined by a disulfide bond. N-linked (GlcNAc...) asparagine glycosylation is found at Asn-133, Asn-200, and Asn-219. In terms of domain architecture, Ig-like C2-type spans Pro-140–Thr-227. Cys-161 and Cys-211 are oxidised to a cystine. Residues Val-233–Val-253 form a helical membrane-spanning segment. Over Val-254–Ala-387 the chain is Cytoplasmic. The interval Lys-266–Ala-387 is disordered. A compositionally biased stretch (basic and acidic residues) spans Pro-284 to Ala-296. Polar residues predominate over residues Leu-299–His-308. The segment covering Thr-325–Gly-335 has biased composition (pro residues). Positions Leu-344 to Ser-368 are enriched in acidic residues.

Highly N-glycosylated. Appears not to contain significant amounts of O-linked carbohydrates or sialic acid in its sugar moieties. In terms of tissue distribution, detected only in stomach mucosa and testis, and to a much lesser level in pancreas (at protein level). Detected in gastric cancers (31%), esophageal carcinomas (50%) and ovarian cancers (23%).

Its subcellular location is the membrane. This is V-set and immunoglobulin domain-containing protein 1 (VSIG1) from Homo sapiens (Human).